The primary structure comprises 213 residues: Ribosomal RNA small subunit methyltransferase G (213 aa).

S-adenosyl-L-methionine-binding positions include Gly-55, 105–106, and Arg-124; that span reads AE.

This sequence belongs to the methyltransferase superfamily. RNA methyltransferase RsmG family.

It is found in the cytoplasm. Functionally, specifically methylates the N7 position of a guanine in 16S rRNA. The sequence is that of Ribosomal RNA small subunit methyltransferase G from Fervidobacterium nodosum (strain ATCC 35602 / DSM 5306 / Rt17-B1).